Reading from the N-terminus, the 565-residue chain is NAD-dependent malic enzyme (565 aa).

The active-site Proton donor is the Tyr104. Arg157 provides a ligand contact to NAD(+). Residue Lys175 is the Proton acceptor of the active site. Residues Glu246, Asp247, and Asp270 each coordinate a divalent metal cation. NAD(+)-binding residues include Asp270 and Asn418.

Belongs to the malic enzymes family. Homotetramer. Mg(2+) serves as cofactor. The cofactor is Mn(2+).

It carries out the reaction (S)-malate + NAD(+) = pyruvate + CO2 + NADH. It catalyses the reaction oxaloacetate + H(+) = pyruvate + CO2. This Photorhabdus laumondii subsp. laumondii (strain DSM 15139 / CIP 105565 / TT01) (Photorhabdus luminescens subsp. laumondii) protein is NAD-dependent malic enzyme.